The following is a 224-amino-acid chain: UPF0173 metal-dependent hydrolase Ta0764 (224 aa).

It belongs to the UPF0173 family.

The protein is UPF0173 metal-dependent hydrolase Ta0764 of Thermoplasma acidophilum (strain ATCC 25905 / DSM 1728 / JCM 9062 / NBRC 15155 / AMRC-C165).